A 95-amino-acid polypeptide reads, in one-letter code: Beta-defensin 132 (95 aa).

Residues 1–22 (MKFLLLVLAALGFLTQVIPASG) form the signal peptide. 3 disulfide bridges follow: Cys27–Cys55, Cys35–Cys49, and Cys39–Cys56. Positions 72-95 (GNHWPSRSRNTQRKNKKQQTTVTP) are disordered.

It belongs to the beta-defensin family.

The protein localises to the secreted. Its function is as follows. Has antibacterial activity. The chain is Beta-defensin 132 (DEFB132) from Macaca fascicularis (Crab-eating macaque).